The following is an 820-amino-acid chain: Trimethylamine-N-oxide reductase (820 aa).

Positions 1-33 form a signal peptide, tat-type signal; that stretch reads MAITRRSFLKGVATTSAASIIGPSLLTSVSAQA. Ser-179 provides a ligand contact to Mo-bis(molybdopterin guanine dinucleotide).

It belongs to the prokaryotic molybdopterin-containing oxidoreductase family. Mo-bis(molybdopterin guanine dinucleotide) serves as cofactor. In terms of processing, predicted to be exported by the Tat system. The position of the signal peptide cleavage has not been experimentally proven.

The protein resides in the periplasm. The enzyme catalyses trimethylamine + 2 Fe(III)-[cytochrome c] + H2O = trimethylamine N-oxide + 2 Fe(II)-[cytochrome c] + 3 H(+). In terms of biological role, reduces trimethylamine-N-oxide (TMAO) into trimethylamine; an anaerobic reaction coupled to energy-yielding reactions. This is Trimethylamine-N-oxide reductase (torA) from Vibrio cholerae serotype O1 (strain ATCC 39315 / El Tor Inaba N16961).